A 64-amino-acid polypeptide reads, in one-letter code: Large ribosomal subunit protein bL35 (64 aa).

The span at 1–26 (MPKIKTHRGAAKRFKKTGTGKIKRSK) shows a compositional bias: basic residues. A disordered region spans residues 1–48 (MPKIKTHRGAAKRFKKTGTGKIKRSKAYASHLLGGKSPKRKRNLRKAG).

This sequence belongs to the bacterial ribosomal protein bL35 family.

In Syntrophomonas wolfei subsp. wolfei (strain DSM 2245B / Goettingen), this protein is Large ribosomal subunit protein bL35.